The sequence spans 734 residues: Mechanosensitive ion channel protein 10 (734 aa).

Disordered regions lie at residues 1 to 75 and 115 to 136; these read MAEQ…LTQR and SFSRASPNNKSNRSVGSPAPVT. Residues 24 to 39 show a composition bias toward basic and acidic residues; sequence EASRRSKEMASPESEK. At S34 the chain carries Phosphoserine. Composition is skewed to polar residues over residues 65-75 and 117-129; these read PNQNNVGLTQR and SRASPNNKSNRSV. Residues S128 and S131 each carry the phosphoserine modification. The next 6 membrane-spanning stretches (helical) occupy residues 164–184, 196–216, 249–269, 288–308, 516–536, and 551–571; these read ISTLALIESAFFVVILSALVA, FWGLEVWKWCVLVMVIFSGML, SVQVFIWLCLILVAWILLFNH, LISILTGAFFWLVKTLLLKIL, LVTAILMVVTVVIWLLLLEVA, and LAFIIGSTCKNLFESIVFVFV.

The protein belongs to the MscS (TC 1.A.23) family. In terms of tissue distribution, detected in the root tip and throughout the vasculature of the root and leaf.

Its subcellular location is the cell membrane. Mechanosensitive channel that opens in response to stretch forces in the membrane lipid bilayer. This is Mechanosensitive ion channel protein 10 (MSL10) from Arabidopsis thaliana (Mouse-ear cress).